A 585-amino-acid chain; its full sequence is Organic cation transporter 1 (585 aa).

Topologically, residues 1 to 40 (MSFQAMETFAEISQEILMSATKPPDFDFVLEQVGNYGTYQ) are cytoplasmic. The chain crosses the membrane as a helical span at residues 41–61 (IVFFFIICLPTSLPSAFSAFN). Residues 62-155 (IPFVVGNPPH…LVCDQQAWIE (94 aa)) are Extracellular-facing. Asn-87, Asn-98, and Asn-133 each carry an N-linked (GlcNAc...) asparagine glycan. The helical transmembrane segment at 156 to 176 (ISTTSFYVGSFIGNCLFGYVA) threads the bilayer. Over 177–184 (DKFGRRRS) the chain is Cytoplasmic. A helical membrane pass occupies residues 185–205 (FFVILTVLIVCGTASSFAKDI). The Extracellular segment spans residues 206–212 (ESFIILR). A helical transmembrane segment spans residues 213 to 233 (FFTGLAFPALFQIPFIICMEF). Residues 234 to 243 (MGNSGRIFSG) lie on the Cytoplasmic side of the membrane. The chain crosses the membrane as a helical span at residues 244–264 (LMTSLFFGAAMALLGVVAMFI). The Extracellular portion of the chain corresponds to 265–269 (RRWRQ). The helical transmembrane segment at 270-290 (LTFFCNAPFAFYIIYYFFLPE) threads the bilayer. Residues 291–360 (SPRWSVSVGK…FKTPNLRRKT (70 aa)) lie on the Cytoplasmic side of the membrane. The chain crosses the membrane as a helical span at residues 361 to 381 (LIVTYIWVMNAIIYNGLTLNV). Topologically, residues 382 to 389 (SNLPVDDY) are extracellular. A helical transmembrane segment spans residues 390–410 (WSFIINGAVELPGYFVVWPLL). The Cytoplasmic portion of the chain corresponds to 411-416 (QCAGRR). Residues 417-437 (WTLAATMIVCGIGCVSAMFMP) form a helical membrane-spanning segment. Residues 438–446 (DGYPWLVAS) are Extracellular-facing. A helical transmembrane segment spans residues 447-467 (ASFIGKFGVGSGFAVIYIFAG). The Cytoplasmic portion of the chain corresponds to 468 to 476 (ELYPTVVRA). The helical transmembrane segment at 477 to 497 (IGMGMSSMVAGSGLLLAPHIV) threads the bilayer. Residues 498-504 (NLGKIVK) are Extracellular-facing. The helical transmembrane segment at 505-525 (ILPLLIMGLMALSAGILTFFL) threads the bilayer. The Cytoplasmic portion of the chain corresponds to 526–585 (PETLGAPLPMTIEDAENFGKKPEPDSGMFTQAAKKRESQPLLEPHTPMDRRRRSSRLMNI). Residues 544 to 585 (GKKPEPDSGMFTQAAKKRESQPLLEPHTPMDRRRRSSRLMNI) form a disordered region. Positions 575 to 585 (RRRRSSRLMNI) are enriched in basic residues.

The protein belongs to the major facilitator (TC 2.A.1) superfamily. Organic cation transporter (TC 2.A.1.19) family.

Its subcellular location is the membrane. In terms of biological role, transports organic cations such as tetraethylammonium (TEA). Displays a broad substrate specificity. The protein is Organic cation transporter 1 (oct-1) of Caenorhabditis elegans.